A 529-amino-acid chain; its full sequence is MFS glucose transporter mfs1 (529 aa).

The next 12 membrane-spanning stretches (helical) occupy residues 7-27 (VYFLCGFATLGGGLFGFDISS), 52-72 (SITCAMPFGSLVGALCSSFIA), 86-106 (ILWIIGSIFMCASNGIPLLVV), 109-129 (VIAGGCVGIASAMVPVYQAEI), 138-158 (VISLQQWAITWGILIQYFIQY), 179-199 (IPWGIQIVPGVILFFGMFLFP), 272-292 (LQMWSQLCGMNVMMYYIVYIM), 301-321 (LLTASIQYILNTALTLPAIIY), 330-350 (AILIGFFLQAIFLYLEGGLQG), 375-395 (AVGKAIIALSYLFVCSFATTI), 415-439 (AVSLATASNWIWNCLLALFVPPLLW), and 446-464 (YMIFAAFNTAAFIHMFLTA).

Belongs to the major facilitator superfamily. Sugar transporter (TC 2.A.1.1) family.

The protein localises to the membrane. Its function is as follows. Probable MFS glucose transporter; part of the gene cluster 27 that mediates the biosynthesis of asparasone A, a sclerotium-specific anthraquinone pigment important for sclerotial survival. This Aspergillus flavus (strain ATCC 200026 / FGSC A1120 / IAM 13836 / NRRL 3357 / JCM 12722 / SRRC 167) protein is MFS glucose transporter mfs1.